The chain runs to 794 residues: Phenylalanine--tRNA ligase beta subunit (794 aa).

The tRNA-binding domain occupies 39–154 (SSSFSSIITA…ANTPLGESAC (116 aa)). The region spanning 403–481 (PPSPTLTLRT…QPWKIEKKKA (79 aa)) is the B5 domain. Mg(2+) contacts are provided by Asp457, Asp463, Glu466, and Glu467. Positions 697–793 (PIYPSSFRDI…QLDDTKGTID (97 aa)) constitute an FDX-ACB domain.

Belongs to the phenylalanyl-tRNA synthetase beta subunit family. Type 1 subfamily. Tetramer of two alpha and two beta subunits. The cofactor is Mg(2+).

The protein localises to the cytoplasm. The enzyme catalyses tRNA(Phe) + L-phenylalanine + ATP = L-phenylalanyl-tRNA(Phe) + AMP + diphosphate + H(+). The chain is Phenylalanine--tRNA ligase beta subunit from Chlamydia abortus (strain DSM 27085 / S26/3) (Chlamydophila abortus).